The primary structure comprises 211 residues: FMN-dependent NADH:quinone oxidoreductase 2 (211 aa).

Residue 17–19 (SYS) participates in FMN binding.

The protein belongs to the azoreductase type 1 family. As to quaternary structure, homodimer. FMN serves as cofactor.

The enzyme catalyses 2 a quinone + NADH + H(+) = 2 a 1,4-benzosemiquinone + NAD(+). It catalyses the reaction N,N-dimethyl-1,4-phenylenediamine + anthranilate + 2 NAD(+) = 2-(4-dimethylaminophenyl)diazenylbenzoate + 2 NADH + 2 H(+). Its function is as follows. Quinone reductase that provides resistance to thiol-specific stress caused by electrophilic quinones. Functionally, also exhibits azoreductase activity. Catalyzes the reductive cleavage of the azo bond in aromatic azo compounds to the corresponding amines. This chain is FMN-dependent NADH:quinone oxidoreductase 2, found in Bacillus licheniformis (strain ATCC 14580 / DSM 13 / JCM 2505 / CCUG 7422 / NBRC 12200 / NCIMB 9375 / NCTC 10341 / NRRL NRS-1264 / Gibson 46).